The primary structure comprises 264 residues: Phycocyanobilin:ferredoxin oxidoreductase (264 aa).

It belongs to the HY2 family.

The enzyme catalyses (2R,3Z)-phycocyanobilin + 4 oxidized [2Fe-2S]-[ferredoxin] = biliverdin IXalpha + 4 reduced [2Fe-2S]-[ferredoxin] + 4 H(+). In terms of biological role, catalyzes the four-electron reduction of biliverdin IX-alpha (2-electron reduction at both the A and D rings); the reaction proceeds via an isolatable 2-electron intermediate, 181,182-dihydrobiliverdin. The protein is Phycocyanobilin:ferredoxin oxidoreductase of Prochlorococcus marinus (strain MIT 9303).